The chain runs to 218 residues: Envelope glycoprotein L (218 aa).

Positions 57 to 185 (KLVKATRLDF…LGPPPLGCFT (129 aa)) are interaction with gH. Positions 60-218 (KATRLDFTWG…ASYYANLQKT (159 aa)) constitute a gL alphaherpesvirus-type domain. 2 disulfide bridges follow: cysteine 81/cysteine 113 and cysteine 183/cysteine 206.

The protein belongs to the herpesviridae glycoprotein L (gL) family. Alphaherpesvirinae gL subfamily. Interacts with glycoprotein H (gH); this interaction is necessary for the correct processing and cell surface expression of gH. The heterodimer gH/gL seems to interact with gB trimers during fusion.

The protein resides in the virion membrane. Its subcellular location is the host cell membrane. It is found in the host Golgi apparatus. The protein localises to the host trans-Golgi network. Functionally, the heterodimer glycoprotein H-glycoprotein L is required for the fusion of viral and plasma membranes leading to virus entry into the host cell. Acts as a functional inhibitor of gH and maintains gH in an inhibited form. Upon binding to host integrins, gL dissociates from gH leading to activation of the viral fusion glycoproteins gB and gH. This Equus caballus (Horse) protein is Envelope glycoprotein L.